Here is a 932-residue protein sequence, read N- to C-terminus: Glycine dehydrogenase (decarboxylating) (932 aa).

Lysine 685 bears the N6-(pyridoxal phosphate)lysine mark.

The protein belongs to the GcvP family. The glycine cleavage system is composed of four proteins: P, T, L and H. Pyridoxal 5'-phosphate serves as cofactor.

The enzyme catalyses N(6)-[(R)-lipoyl]-L-lysyl-[glycine-cleavage complex H protein] + glycine + H(+) = N(6)-[(R)-S(8)-aminomethyldihydrolipoyl]-L-lysyl-[glycine-cleavage complex H protein] + CO2. In terms of biological role, the glycine cleavage system catalyzes the degradation of glycine. The P protein binds the alpha-amino group of glycine through its pyridoxal phosphate cofactor; CO(2) is released and the remaining methylamine moiety is then transferred to the lipoamide cofactor of the H protein. In Brucella melitensis biotype 2 (strain ATCC 23457), this protein is Glycine dehydrogenase (decarboxylating).